Consider the following 229-residue polypeptide: 2-C-methyl-D-erythritol 4-phosphate cytidylyltransferase (229 aa).

The protein belongs to the IspD/TarI cytidylyltransferase family. IspD subfamily.

It carries out the reaction 2-C-methyl-D-erythritol 4-phosphate + CTP + H(+) = 4-CDP-2-C-methyl-D-erythritol + diphosphate. It participates in isoprenoid biosynthesis; isopentenyl diphosphate biosynthesis via DXP pathway; isopentenyl diphosphate from 1-deoxy-D-xylulose 5-phosphate: step 2/6. In terms of biological role, catalyzes the formation of 4-diphosphocytidyl-2-C-methyl-D-erythritol from CTP and 2-C-methyl-D-erythritol 4-phosphate (MEP). In Neisseria meningitidis serogroup C (strain 053442), this protein is 2-C-methyl-D-erythritol 4-phosphate cytidylyltransferase.